The primary structure comprises 168 residues: Phosphopantetheine adenylyltransferase (168 aa).

T10 is a substrate binding site. ATP-binding positions include 10-11 (TF) and H18. Positions 42, 74, and 88 each coordinate substrate. Residues 89-91 (GLR), E99, and 124-130 (NSFISST) contribute to the ATP site.

It belongs to the bacterial CoaD family. As to quaternary structure, homohexamer. Mg(2+) is required as a cofactor.

It localises to the cytoplasm. It catalyses the reaction (R)-4'-phosphopantetheine + ATP + H(+) = 3'-dephospho-CoA + diphosphate. It functions in the pathway cofactor biosynthesis; coenzyme A biosynthesis; CoA from (R)-pantothenate: step 4/5. In terms of biological role, reversibly transfers an adenylyl group from ATP to 4'-phosphopantetheine, yielding dephospho-CoA (dPCoA) and pyrophosphate. The chain is Phosphopantetheine adenylyltransferase from Shewanella denitrificans (strain OS217 / ATCC BAA-1090 / DSM 15013).